The sequence spans 333 residues: ADP-L-glycero-D-manno-heptose-6-epimerase (333 aa).

Residues 11 to 12 (FI), 32 to 33 (DN), lysine 39, lysine 54, 76 to 80 (QGACS), and asparagine 93 each bind NADP(+). Tyrosine 140 serves as the catalytic Proton acceptor. Residue lysine 144 coordinates NADP(+). Residue asparagine 170 coordinates substrate. Residues valine 171 and lysine 179 each coordinate NADP(+). Lysine 179 functions as the Proton acceptor in the catalytic mechanism. Residues arginine 181, histidine 188, 202-205 (FGGW), arginine 215, and tyrosine 294 each bind substrate.

It belongs to the NAD(P)-dependent epimerase/dehydratase family. HldD subfamily. As to quaternary structure, homopentamer. It depends on NADP(+) as a cofactor.

The enzyme catalyses ADP-D-glycero-beta-D-manno-heptose = ADP-L-glycero-beta-D-manno-heptose. It functions in the pathway nucleotide-sugar biosynthesis; ADP-L-glycero-beta-D-manno-heptose biosynthesis; ADP-L-glycero-beta-D-manno-heptose from D-glycero-beta-D-manno-heptose 7-phosphate: step 4/4. It participates in bacterial outer membrane biogenesis; LPS core biosynthesis. In terms of biological role, catalyzes the interconversion between ADP-D-glycero-beta-D-manno-heptose and ADP-L-glycero-beta-D-manno-heptose via an epimerization at carbon 6 of the heptose. The polypeptide is ADP-L-glycero-D-manno-heptose-6-epimerase (Chromobacterium violaceum (strain ATCC 12472 / DSM 30191 / JCM 1249 / CCUG 213 / NBRC 12614 / NCIMB 9131 / NCTC 9757 / MK)).